Consider the following 50-residue polypeptide: Cytochrome c-555 (50 aa).

Heme is bound by residues Cys7, Cys10, His11, and Met25.

Binds 1 heme group per subunit.

It is found in the cell membrane. The sequence is that of Cytochrome c-555 from Schinkia azotoformans (Bacillus azotoformans).